A 464-amino-acid chain; its full sequence is Neuronal acetylcholine receptor subunit beta-3 (464 aa).

The signal sequence occupies residues 1–30 (MTGFLRVFLVLSATLSGSWVTLTATAGLSS). Residues 31 to 238 (VAEHEDALLR…VTYSFVLRRL (208 aa)) lie on the Extracellular side of the membrane. N-linked (GlcNAc...) asparagine glycans are attached at residues N55 and N172. Residues C159 and C173 are joined by a disulfide bond. A run of 3 helical transmembrane segments spans residues 239 to 263 (PLFYTLFLIIPCLGLSFLTVLVFYL), 271 to 288 (LSLSTSVLVSLTVFLLVI), and 305 to 326 (YLLFIMIFVTLSIIVTVFVINV). Topologically, residues 327–434 (HHRSSSTYHP…WKFVAQVLDR (108 aa)) are cytoplasmic. A helical membrane pass occupies residues 435 to 453 (IFLWLFLIASVLGSILIFI).

This sequence belongs to the ligand-gated ion channel (TC 1.A.9) family. Acetylcholine receptor (TC 1.A.9.1) subfamily. Beta-3/CHRNB3 sub-subfamily. Neuronal AChR seems to be composed of two different type of subunits: alpha and beta. CHRNB3/beta-3 subunit is only able to form functional nAChRs when co-assembled with another beta subunit. Participates in pentameric assemblies along with CHRNA4/alpha-4 and CHRNB2/beta-2 subunits and with CHRNA6/alpha-6 as well, forming stoichiometries such as (CHRNA3:CHRNB4)2:CHRNB3, (CHRNA4:CHRNB2)2:CHRNB3 or (CHRNA6:CHRNB2)2:CHRNB3.

The protein resides in the synaptic cell membrane. It is found in the cell membrane. It carries out the reaction Ca(2+)(in) = Ca(2+)(out). The enzyme catalyses K(+)(in) = K(+)(out). The catalysed reaction is Na(+)(in) = Na(+)(out). Its activity is regulated as follows. Activated by a myriad of ligands such as acetylcholine, cytisine, nicotine, choline and epibatidine. In terms of biological role, component of neuronal acetylcholine receptors (nAChRs) that function as pentameric, ligand-gated cation channels with high calcium permeability among other activities. nAChRs are excitatory neurotrasnmitter receptors formed by a collection of nAChR subunits known to mediate synaptic transmission in the nervous system and the neuromuscular junction. Each nAchR subunit confers differential attributes to channel properties, including activation, deactivation and desensitization kinetics, pH sensitivity, cation permeability, and binding to allosteric modulators. Has an accessory rather than functional role and is only able to form functional nAChRs when co-assembled with another beta subunit. Participates in pentameric assemblies along with CHRNA3, CHRNA4, CHRNA6, CHRNB2 and CHRNB4. Modulates receptor assembly and increases receptor sensitivity to nicotine when associated with CHRNB2, CHRNA4 and/or CHRNA6 as well as CHRNA3 and CHRNB4. Seems to play a role in nicotine addiction. This Rattus norvegicus (Rat) protein is Neuronal acetylcholine receptor subunit beta-3 (Chrnb3).